Here is a 184-residue protein sequence, read N- to C-terminus: Ribosome-recycling factor (184 aa).

The protein belongs to the RRF family.

It localises to the cytoplasm. In terms of biological role, responsible for the release of ribosomes from messenger RNA at the termination of protein biosynthesis. May increase the efficiency of translation by recycling ribosomes from one round of translation to another. The sequence is that of Ribosome-recycling factor from Clostridium botulinum (strain Langeland / NCTC 10281 / Type F).